Reading from the N-terminus, the 360-residue chain is Mannonate dehydratase (360 aa).

Belongs to the mannonate dehydratase family. The cofactor is Fe(2+). It depends on Mn(2+) as a cofactor.

It catalyses the reaction D-mannonate = 2-dehydro-3-deoxy-D-gluconate + H2O. It functions in the pathway carbohydrate metabolism; pentose and glucuronate interconversion. Catalyzes the dehydration of D-mannonate. The chain is Mannonate dehydratase from Thermotoga sp. (strain RQ2).